The sequence spans 458 residues: 3-isopropylmalate dehydratase large subunit (458 aa).

The [4Fe-4S] cluster site is built by cysteine 339, cysteine 399, and cysteine 402.

The protein belongs to the aconitase/IPM isomerase family. LeuC type 1 subfamily. Heterodimer of LeuC and LeuD. Requires [4Fe-4S] cluster as cofactor.

The catalysed reaction is (2R,3S)-3-isopropylmalate = (2S)-2-isopropylmalate. It functions in the pathway amino-acid biosynthesis; L-leucine biosynthesis; L-leucine from 3-methyl-2-oxobutanoate: step 2/4. Its function is as follows. Catalyzes the isomerization between 2-isopropylmalate and 3-isopropylmalate, via the formation of 2-isopropylmaleate. The polypeptide is 3-isopropylmalate dehydratase large subunit (Lactococcus lactis subsp. cremoris (strain MG1363)).